The chain runs to 834 residues: Glycerol-3-phosphate acyltransferase (834 aa).

Residues Cys-304 to Met-309 carry the HXXXXD motif motif. Residues Ser-800–Ser-834 are disordered.

The protein belongs to the GPAT/DAPAT family.

It localises to the cell inner membrane. The catalysed reaction is sn-glycerol 3-phosphate + an acyl-CoA = a 1-acyl-sn-glycero-3-phosphate + CoA. It functions in the pathway phospholipid metabolism; CDP-diacylglycerol biosynthesis; CDP-diacylglycerol from sn-glycerol 3-phosphate: step 1/3. This is Glycerol-3-phosphate acyltransferase from Yersinia pseudotuberculosis serotype I (strain IP32953).